The primary structure comprises 413 residues: Calsequestrin-2 (413 aa).

A signal peptide spans 1–19 (MKRIYLLVVGLYLLSFSRA). A Phosphotyrosine modification is found at Y282. The N-linked (GlcNAc...) asparagine glycan is linked to N335. A disordered region spans residues 365 to 413 (VLSGKINTEDDDNEDEDDDGDNDNDDDDDDDDNSDEDNDDSDDDDDDDE). Over residues 373-413 (EDDDNEDEDDDGDNDNDDDDDDDDNSDEDNDDSDDDDDDDE) the composition is skewed to acidic residues. Residues S398 and S405 each carry the phosphoserine modification.

The protein belongs to the calsequestrin family. In terms of assembly, monomer, homodimer and homooligomer. Mostly monomeric in the absence of calcium. Forms higher oligomers in a calcium-dependent manner. Dimers associate to form tetramers, that then form linear homomer chains. Interacts with ASPH and TRDN. Post-translationally, phosphorylation in the C-terminus, probably by CK2, moderately increases calcium buffering capacity. N-glycosylated. In terms of tissue distribution, detected in stomach and vas deferens (at protein level).

It is found in the sarcoplasmic reticulum lumen. Calsequestrin is a high-capacity, moderate affinity, calcium-binding protein and thus acts as an internal calcium store in muscle. Calcium ions are bound by clusters of acidic residues at the protein surface, especially at the interface between subunits. Can bind around 60 Ca(2+) ions. Regulates the release of lumenal Ca(2+) via the calcium release channel RYR2; this plays an important role in triggering muscle contraction. Plays a role in excitation-contraction coupling in the heart and in regulating the rate of heart beats. The polypeptide is Calsequestrin-2 (Casq2) (Rattus norvegicus (Rat)).